Reading from the N-terminus, the 260-residue chain is UPF0246 protein Bcenmc03_2247 (260 aa).

The protein belongs to the UPF0246 family.

The protein is UPF0246 protein Bcenmc03_2247 of Burkholderia orbicola (strain MC0-3).